Consider the following 421-residue polypeptide: Ankyrin repeat and SOCS box protein 6 (421 aa).

ANK repeat units lie at residues 67–97 (EGVS…NLNF), 102–131 (TYYT…DINR), 136–166 (HESS…DVNA), 170–205 (HGKT…DVKA), 226–255 (GGDK…DPSE), and 260–289 (ESLT…AYNC). Residues 360 to 415 (ALHFSLRQLESYPPPLKHLCRVAIRLYLQPWPVDVKVKALPLPDRLKWYLLSEHSG) form the SOCS box domain.

It belongs to the ankyrin SOCS box (ASB) family. Binds APS. Identified in a complex with ELOB and ELOC. Interacts with CUL5 and RNF7. Interacts with SQSTM1.

The protein localises to the cytoplasm. It functions in the pathway protein modification; protein ubiquitination. Functionally, probable substrate-recognition component of a SCF-like ECS (Elongin-Cullin-SOCS-box protein) E3 ubiquitin-protein ligase complex which mediates the ubiquitination and subsequent proteasomal degradation of target proteins. May play a role in the regulation of cell proliferation and autophagy by promoting the ubiquitination and degradation of SQSTM1. This is Ankyrin repeat and SOCS box protein 6 (ASB6) from Pongo abelii (Sumatran orangutan).